The following is a 348-amino-acid chain: Ricin B-like lectin R40C1 (348 aa).

Residues 1–26 form a disordered region; that stretch reads MFGFGHHGHHGQDQPPQHHGGGGGGA. A Ricin B-type lectin domain is found at 199 to 345; the sequence is TVRIFCKADE…CEGDNQRWKI (147 aa).

Expressed in roots and shoots.

Functionally, lectin which binds carbohydrates in vitro. Interacts through its lectin domain with glycan structures containing specific motifs. The chain is Ricin B-like lectin R40C1 from Oryza sativa subsp. japonica (Rice).